Consider the following 626-residue polypeptide: MTKLVRSRLDLTWVFTTMKRLRLPVLAVLFLAISPVQGGEIQIPVIKDGEAQVIKELEDSDYWIRHDLWVETEFDLDGDGKLDRMHVSVTRPTQTDTQSLKLPVIYNSSPYFAGTTGGDESYFWDARQELGDEPPKRSAAPAIEREGTRPIISKRHVKDWLPRGFVVVHSSAPGTGLSQGCPTVGDDPEALAPKAVIDWLCGRAKGFTEPFGGEPVEAYWSSGKVGMTGTSYNGTIPLAAATTGVEGLEVIIPVAPNTSYYHYYRSNGLVRHPGGYLGEDIDILYDFIHSGGDEETRAYCDCHIRDEQMMANQDRATGDYNDFWYSRDYLNRVDGVKAAVLMAHAFNDWNVVPEHSIRIYEALKKNGVETQLFMHQGGHGGPPPISMMNRWFTHYLYGEDNGVEKGSKSWIVREKDERTKPTEYPQYPHPEAKDVVVYPVPGAPQRGRLQTAPLTEPITETLVDNFSFAGETLAQAEYTEHRLIYTTPELSEAVHLSGTPRIKLRLACDRPAANLSVWLVSLPWNTQKNSKITDNIITRGWADPQNIESMRESKPLVPGQFYDIEFDLQPDDQVIAKGQQIGLMVFSSDRDYTLHPTPGTKLTIDLQHTQLSLPVVGGTIPLESQD.

Residues S231, D348, and H379 each act as charge relay system in the active site.

This sequence belongs to the peptidase S15 family.

It carries out the reaction Hydrolyzes Xaa-Pro-|- bonds to release unblocked, N-terminal dipeptides from substrates including Ala-Pro-|-p-nitroanilide and (sequentially) Tyr-Pro-|-Phe-Pro-|-Gly-Pro-|-Ile.. This chain is Putative Xaa-Pro dipeptidyl-peptidase, found in Rhodopirellula baltica (strain DSM 10527 / NCIMB 13988 / SH1).